The chain runs to 359 residues: Probable ribonucleotide transport ATP-binding protein mkl (359 aa).

An ABC transporter domain is found at 28 to 264 (IEVNGLTKSF…DEPVVRQFLN (237 aa)). 60–67 (GPSGTGKS) lines the ATP pocket.

The protein belongs to the ABC transporter superfamily.

Not known, could be involved in the transport of ribonucleotides. The chain is Probable ribonucleotide transport ATP-binding protein mkl (mkl) from Mycobacterium bovis (strain ATCC BAA-935 / AF2122/97).